Consider the following 383-residue polypeptide: S-adenosylmethionine:tRNA ribosyltransferase-isomerase (383 aa).

The protein belongs to the QueA family. In terms of assembly, monomer.

The protein localises to the cytoplasm. It catalyses the reaction 7-aminomethyl-7-carbaguanosine(34) in tRNA + S-adenosyl-L-methionine = epoxyqueuosine(34) in tRNA + adenine + L-methionine + 2 H(+). Its pathway is tRNA modification; tRNA-queuosine biosynthesis. Its function is as follows. Transfers and isomerizes the ribose moiety from AdoMet to the 7-aminomethyl group of 7-deazaguanine (preQ1-tRNA) to give epoxyqueuosine (oQ-tRNA). This Rickettsia prowazekii (strain Madrid E) protein is S-adenosylmethionine:tRNA ribosyltransferase-isomerase.